The sequence spans 1333 residues: NPC1-like intracellular cholesterol transporter 1 (1333 aa).

An N-terminal signal peptide occupies residues 1–20 (MAAAWQGWLLWALLLNSAQG). Residues 21–284 (ELYTPTHKAG…SFYMGRMPGW (264 aa)) are Extracellular-facing. Disulfide bonds link Cys32–Cys90, Cys38–Cys56, Cys77–Cys125, Cys91–Cys129, Cys113–Cys254, Cys116–Cys172, Cys189–Cys197, Cys243–Cys259, and Cys256–Cys263. The helical transmembrane segment at 285–305 (LALIIIFTAVFVLLSVVLVYL) threads the bilayer. The Cytoplasmic segment spans residues 306–352 (RVASNRNKNKTAGSQEAPNLPRKRRFSPHTVLGRFFESWGTRVASWP). Residues 353–373 (LTVLALSFIVVIALSVGLTFI) form a helical membrane-spanning segment. Topologically, residues 374-632 (ELTTDPVELW…DEINRTTIQD (259 aa)) are extracellular. Cystine bridges form between Cys471–Cys485 and Cys525–Cys542. An SSD domain is found at 632 to 797 (DLPVFAISYL…MTAFVALLSL (166 aa)). Residues 633–653 (LPVFAISYLIVFLYISLALGS) form a helical membrane-spanning segment. Residues 654–665 (YSRWSRVAVDSK) are Cytoplasmic-facing. The chain crosses the membrane as a helical span at residues 666-686 (ATLGLGGVAVVLGAVVAAMGF). At 687-696 (YSYLGVPSSL) the chain is on the extracellular side. Residues 697 to 717 (VIIQVVPFLVLAVGADNIFIF) form a helical membrane-spanning segment. Topologically, residues 718–742 (VLEYQRLPRMPGEQREAHIGRTLGS) are cytoplasmic. The helical transmembrane segment at 743–763 (VAPSMLLCSLSEAICFFLGAL) threads the bilayer. The Extracellular segment spans residues 764–776 (TSMPAVRTFALTS). Residues 777 to 797 (GLAIIFDFLLQMTAFVALLSL) form a helical membrane-spanning segment. The Cytoplasmic portion of the chain corresponds to 798-846 (DSKRQEASRPDVVCCFSSRNLPPPKQKEGLLLCFFRKIYTPFLLHRFIR). A helical membrane pass occupies residues 847–867 (PVVLLLFLVLFGANLYLMCNI). Residues 868–1113 (SVGLDQDLAL…QQYLTVLPEG (246 aa)) are Extracellular-facing. Cystine bridges form between Cys920–Cys925, Cys967–Cys1025, and Cys981–Cys990. Residues 1114–1134 (IFTLALCFVPTFVVCYLLLGL) traverse the membrane as a helical segment. The Cytoplasmic segment spans residues 1135–1142 (DIRSGILN). Residues 1143–1163 (LLSIIMILVDTIGLMAVWGIS) form a helical membrane-spanning segment. Residues 1164–1165 (YN) are Extracellular-facing. Residues 1166–1186 (AVSLINLVTAVGMSVEFVSHI) traverse the membrane as a helical segment. Topologically, residues 1187–1206 (TRSFAVSTKPTRLERAKDAT) are cytoplasmic. The chain crosses the membrane as a helical span at residues 1207–1227 (IFMGSAVFAGVAMTNFPGILI). The Extracellular segment spans residues 1228–1242 (LGFAQAQLIQIFFFR). The chain crosses the membrane as a helical span at residues 1243 to 1263 (LNLLITLLGLLHGLVFLPVVL). The Cytoplasmic segment spans residues 1264-1333 (SYLGPDVNQA…SSLPKSDQKF (70 aa)).

Belongs to the patched family. In terms of assembly, interacts with RAB11A, MYO5B and RAB11FIP2. Interaction with RAB11A, MYO5B and RAB11FIP2 is required for proper transport to the plasma membrane upon cholesterol depletion. Interacts with NPC2. Interacts with LIMA1. In terms of processing, highly glycosylated. Expressed in small intestine, stomach and muscle, along with detectable expression in lung, heart, gall bladder, brain, testis, skin and liver. Expression in liver is extremely low.

Its subcellular location is the apical cell membrane. It localises to the cell membrane. It carries out the reaction cholesterol(in) = cholesterol(out). The catalysed reaction is sitosterol(out) = sitosterol(in). Plays a major role in cholesterol homeostasis. Critical for the uptake of cholesterol across the plasma membrane of the intestinal enterocyte. Involved in plant sterol absorption, it transports sitosterol, although at lower rates than cholesterol. May have a function in the transport of multiple lipids and their homeostasis, thereby influencing lipid metabolism regulation. May be involved in caveolin trafficking from the plasma membrane. Acts as a negative regulator of NPC2 and down-regulates its expression and secretion by inhibiting its maturation and accelerating its degradation. In Mus musculus (Mouse), this protein is NPC1-like intracellular cholesterol transporter 1.